A 341-amino-acid polypeptide reads, in one-letter code: Bis(monoacylglycero)phosphate synthase CLN5 (341 aa).

Topologically, residues Met-1–Pro-13 are cytoplasmic. A helical; Signal-anchor for type II membrane protein membrane pass occupies residues Ala-14–Pro-30. The Lumenal segment spans residues Thr-31–Leu-341. 2 disulfides stabilise this stretch: Cys-53–Cys-142 and Cys-60–Cys-148. The active-site Proton acceptor is His-100. N-linked (GlcNAc...) asparagine glycosylation is found at Asn-113, Asn-126, Asn-161, and Asn-186. The active-site Nucleophile; Acyl-thioester intermediate is Cys-214. Residues Asn-238, Asn-254, and Asn-264 are each glycosylated (N-linked (GlcNAc...) asparagine). A membrane-anchoring region spans residues Phe-287 to Tyr-326.

It belongs to the CLN5 family. In terms of assembly, multimer. Interacts with PPT1, TPP1, CLN3, CLN6, CLN8, ATP5F1A and ATP5F1B. Interacts with SORT1, RAB5A and RAB7A. N-glycosylated with both high mannose and complex type sugars. Glycosylation is important for proper folding and trafficking to the lysosomes. In terms of processing, the type II membrane signal anchor is proteolytically cleaved to produce a mature form that is transported to the lysosomes (Bis(monoacylglycero)phosphate synthase CLN5, secreted form). Post-translationally, can undergo proteolytic cleavage at the C-terminus, probably by a cysteine protease and may involve the removal of approximately 10-15 residues from the C-terminal end. As to expression, heart, kidney, liver, spleen, muscle and rectum (at protein level).

It is found in the lysosome. It localises to the membrane. The enzyme catalyses S-hexadecanoyl-L-cysteinyl-[protein] + H2O = L-cysteinyl-[protein] + hexadecanoate + H(+). It carries out the reaction 2 1-acyl-sn-glycero-3-phospho-(1'-sn-glycerol) = 1-acyl-sn-glycero-3-phospho-(3'-acyl-sn-1'-glycerol) + sn-glycero-3-phospho-(1'-sn-glycerol). It catalyses the reaction 2 1-(9Z-octadecenoyl)-sn-glycero-3-phospho-(1'-sn-glycerol) = 1-(9Z-octadecenoyl)-sn-glycero-3-phospho-(3'-(9Z-octadecenoyl)-1'-sn-glycerol) + sn-glycero-3-phospho-(1'-sn-glycerol). The catalysed reaction is 2 1-octadecanoyl-sn-glycero-3-phospho-(1'-sn-glycerol) = 1-octadecanoyl-sn-glycero-3-phospho-(3'-octadecanoyl-1'-sn-glycerol) + sn-glycero-3-phospho-(1'-sn-glycerol). The enzyme catalyses 2 1-hexadecanoyl-sn-glycero-3-phospho-(1'-sn-glycerol) = 1-hexadecanoyl-sn-glycero-3-phospho-(3'-hexadecanoyl-1'-sn-glycerol) + sn-glycero-3-phospho-(1'-sn-glycerol). It carries out the reaction 2 1-tetradecanoyl-sn-glycero-3-phospho-(1'-sn-glycerol) = 1-tetradecanoyl-sn-glycero-3-phospho-(3'-tetradecanoyl-1'-sn-glycerol) + sn-glycero-3-phospho-(1'-sn-glycerol). In terms of biological role, catalyzes the synthesis of bis(monoacylglycero)phosphate (BMP) via transacylation of 2 molecules of lysophosphatidylglycerol (LPG). BMP also known as lysobisphosphatidic acid plays a key role in the formation of intraluminal vesicles and in maintaining intracellular cholesterol homeostasis. Can use only LPG as the exclusive lysophospholipid acyl donor for base exchange and displays BMP synthase activity towards various LPGs (LPG 14:0, LPG 16:0, LPG 18:0, LPG 18:1) with a higher preference for longer chain lengths. Plays a role in influencing the retrograde trafficking of lysosomal sorting receptors SORT1 and IGF2R from the endosomes to the trans-Golgi network by controlling the recruitment of retromer complex to the endosomal membrane. Regulates the localization and activation of RAB7A which is required to recruit the retromer complex to the endosomal membrane. Exhibits palmitoyl protein thioesterase (S-depalmitoylation) activity in vitro and most likely plays a role in protein S-depalmitoylation. In Mus musculus (Mouse), this protein is Bis(monoacylglycero)phosphate synthase CLN5 (Cln5).